A 268-amino-acid chain; its full sequence is Virulence plasmid ParA family protein pGP5-D (268 aa).

13-20 (FKGGTGKT) contributes to the ATP binding site.

The protein belongs to the ParA family.

The sequence is that of Virulence plasmid ParA family protein pGP5-D from Chlamydia muridarum (strain MoPn / Nigg).